A 261-amino-acid polypeptide reads, in one-letter code: 5'-nucleotidase SurE (261 aa).

A divalent metal cation is bound by residues Asp-12, Asp-13, Ser-43, and Asn-100.

The protein belongs to the SurE nucleotidase family. It depends on a divalent metal cation as a cofactor.

The protein localises to the cytoplasm. It carries out the reaction a ribonucleoside 5'-phosphate + H2O = a ribonucleoside + phosphate. Its function is as follows. Nucleotidase that shows phosphatase activity on nucleoside 5'-monophosphates. The chain is 5'-nucleotidase SurE from Protochlamydia amoebophila (strain UWE25).